We begin with the raw amino-acid sequence, 355 residues long: tRNA uridine(34) hydroxylase (355 aa).

Positions aspartate 146–leucine 240 constitute a Rhodanese domain. Cysteine 200 functions as the Cysteine persulfide intermediate in the catalytic mechanism.

Belongs to the TrhO family.

It carries out the reaction uridine(34) in tRNA + AH2 + O2 = 5-hydroxyuridine(34) in tRNA + A + H2O. In terms of biological role, catalyzes oxygen-dependent 5-hydroxyuridine (ho5U) modification at position 34 in tRNAs. In Pectobacterium carotovorum subsp. carotovorum (strain PC1), this protein is tRNA uridine(34) hydroxylase.